Consider the following 303-residue polypeptide: Acetylglutamate kinase (303 aa).

Substrate-binding positions include 76–77, R98, and N199; that span reads GG.

The protein belongs to the acetylglutamate kinase family. ArgB subfamily.

The protein localises to the cytoplasm. The enzyme catalyses N-acetyl-L-glutamate + ATP = N-acetyl-L-glutamyl 5-phosphate + ADP. Its pathway is amino-acid biosynthesis; L-arginine biosynthesis; N(2)-acetyl-L-ornithine from L-glutamate: step 2/4. Its function is as follows. Catalyzes the ATP-dependent phosphorylation of N-acetyl-L-glutamate. The chain is Acetylglutamate kinase from Clavibacter sepedonicus (Clavibacter michiganensis subsp. sepedonicus).